We begin with the raw amino-acid sequence, 549 residues long: Probable protein kinase UbiB (549 aa).

One can recognise a Protein kinase domain in the interval 123 to 501 (DFNDTPLASA…QQKSHKSNYL (379 aa)). Residues 129–137 (LASASISQV) and K152 contribute to the ATP site. D287 (proton acceptor) is an active-site residue. 2 consecutive transmembrane segments (helical) span residues 498–518 (SNYLLITSAVLLICGTILFTQ) and 519–539 (IVTLWPAYTCIGAGILIWAIG).

The protein belongs to the ABC1 family. UbiB subfamily.

The protein localises to the cell inner membrane. The protein operates within cofactor biosynthesis; ubiquinone biosynthesis [regulation]. In terms of biological role, is probably a protein kinase regulator of UbiI activity which is involved in aerobic coenzyme Q (ubiquinone) biosynthesis. This Shewanella frigidimarina (strain NCIMB 400) protein is Probable protein kinase UbiB.